We begin with the raw amino-acid sequence, 421 residues long: Imidazolonepropionase (421 aa).

His-81 and His-83 together coordinate Fe(3+). Positions 81 and 83 each coordinate Zn(2+). Residues Arg-90, Tyr-153, and His-186 each coordinate 4-imidazolone-5-propanoate. Tyr-153 provides a ligand contact to N-formimidoyl-L-glutamate. A Fe(3+)-binding site is contributed by His-251. A Zn(2+)-binding site is contributed by His-251. Glu-254 contacts 4-imidazolone-5-propanoate. Fe(3+) is bound at residue Asp-326. Asp-326 provides a ligand contact to Zn(2+). Asn-328 and Gly-330 together coordinate N-formimidoyl-L-glutamate. Residue Ser-331 coordinates 4-imidazolone-5-propanoate.

The protein belongs to the metallo-dependent hydrolases superfamily. HutI family. The cofactor is Zn(2+). Fe(3+) is required as a cofactor.

It is found in the cytoplasm. It carries out the reaction 4-imidazolone-5-propanoate + H2O = N-formimidoyl-L-glutamate. Its pathway is amino-acid degradation; L-histidine degradation into L-glutamate; N-formimidoyl-L-glutamate from L-histidine: step 3/3. Its function is as follows. Catalyzes the hydrolytic cleavage of the carbon-nitrogen bond in imidazolone-5-propanoate to yield N-formimidoyl-L-glutamate. It is the third step in the universal histidine degradation pathway. The polypeptide is Imidazolonepropionase (Streptococcus pyogenes serotype M28 (strain MGAS6180)).